Here is a 433-residue protein sequence, read N- to C-terminus: 3-phosphoshikimate 1-carboxyvinyltransferase (433 aa).

Residues Lys22, Ser23, and Arg27 each coordinate 3-phosphoshikimate. Residue Lys22 participates in phosphoenolpyruvate binding. Gly95 and Arg123 together coordinate phosphoenolpyruvate. Positions 167, 169, 315, and 342 each coordinate 3-phosphoshikimate. Residue Gln169 coordinates phosphoenolpyruvate. The Proton acceptor role is filled by Asp315. Phosphoenolpyruvate-binding residues include Arg346 and Arg387.

The protein belongs to the EPSP synthase family. As to quaternary structure, monomer.

The protein localises to the cytoplasm. It catalyses the reaction 3-phosphoshikimate + phosphoenolpyruvate = 5-O-(1-carboxyvinyl)-3-phosphoshikimate + phosphate. It participates in metabolic intermediate biosynthesis; chorismate biosynthesis; chorismate from D-erythrose 4-phosphate and phosphoenolpyruvate: step 6/7. Catalyzes the transfer of the enolpyruvyl moiety of phosphoenolpyruvate (PEP) to the 5-hydroxyl of shikimate-3-phosphate (S3P) to produce enolpyruvyl shikimate-3-phosphate and inorganic phosphate. This is 3-phosphoshikimate 1-carboxyvinyltransferase from Legionella pneumophila (strain Paris).